Here is a 661-residue protein sequence, read N- to C-terminus: Acyl-coenzyme A oxidase acox-1.2 (661 aa).

FAD is bound by residues 147 to 150, 155 to 156, and G189; these read YAQT and GS. Residues 283 to 286 and R293 contribute to the substrate site; that span reads KIGY. FAD is bound by residues R318 and 338–341; that span reads QQHR. H340, S390, H394, and Q402 together coordinate ATP. An FAD-binding site is contributed by G409. 431–432 is a binding site for substrate; the sequence is YE. E432 (proton acceptor) is an active-site residue. E434 is an FAD binding site. ATP-binding positions include 525-528 and Y573; that span reads RASR. The short motif at 659–661 is the Microbody targeting signal element; it reads AKL.

The protein belongs to the acyl-CoA oxidase family. As to quaternary structure, homodimer. Forms a heterodimer with acox-1.1. FAD serves as cofactor.

The protein resides in the peroxisome. The catalysed reaction is asc-omegaC5-CoA + O2 = asc-omegaDeltaC5-CoA + H2O2. It functions in the pathway lipid metabolism; peroxisomal fatty acid beta-oxidation. Its activity is regulated as follows. Activated by ATP. ATP binding leads to a conformational change that promotes FAD cofactor binding and enzyme activity. ATP binding likely occurs during acox-1.2 folding and/or dimer formation. The preference for processing substrates with shorter fatty acid chains is likely due to the closed conformation of the active site. Involved in the first step of peroxisomal beta-oxidation by catalyzing the desaturation of fatty acid-derived side chains of ascaroside pheromones, which regulates development and behavior. Specifically, shortens ascarosides with 5-carbon omega side chain (asc-omega-C5). Does not shorten indol-3-carbonyl(IC)-ascaroside with 7-carbon or 9-carbon side chains. Does not catalyze the desaturation of fatty acids or hydroxylated fatty acids. The chain is Acyl-coenzyme A oxidase acox-1.2 from Caenorhabditis elegans.